A 90-amino-acid polypeptide reads, in one-letter code: Large ribosomal subunit protein eL33 (90 aa).

The protein belongs to the eukaryotic ribosomal protein eL33 family.

The chain is Large ribosomal subunit protein eL33 from Methanopyrus kandleri (strain AV19 / DSM 6324 / JCM 9639 / NBRC 100938).